We begin with the raw amino-acid sequence, 641 residues long: Bifunctional protein glk (641 aa).

The segment at 1–21 is disordered; that stretch reads MSTGAQTKAAEASQHADGPRL. A glucokinase region spans residues 1–340; the sequence is MSTGAQTKAA…QLSNRTGGAS (340 aa). An ATP-binding site is contributed by 23–28; that stretch reads ADVGGT. The HTH rpiR-type domain maps to 341 to 417; that stretch reads SAVFERIRQM…LKLATGLTGT (77 aa). Residues 341-641 form a putative HTH-type transcriptional regulator region; the sequence is SAVFERIRQM…SHGAAPAAKE (301 aa). The H-T-H motif DNA-binding region spans 377–396; the sequence is IVDIARKADVSQPTVIRFCR. An SIS domain is found at 461 to 600; it reads AIDILNNARR…AVGVAIRRAS (140 aa). The helical transmembrane segment at 576–596 threads the bilayer; the sequence is SMISRILHLVMIDILAVGVAI.

It in the N-terminal section; belongs to the bacterial glucokinase family.

Its subcellular location is the membrane. It catalyses the reaction D-glucose + ATP = D-glucose 6-phosphate + ADP + H(+). The chain is Bifunctional protein glk (glk) from Burkholderia thailandensis (strain ATCC 700388 / DSM 13276 / CCUG 48851 / CIP 106301 / E264).